Here is a 365-residue protein sequence, read N- to C-terminus: Phospho-N-acetylmuramoyl-pentapeptide-transferase (365 aa).

The next 10 membrane-spanning stretches (helical) occupy residues 22 to 42 (YISVRIIMISITSLLITLALG), 74 to 94 (TMGGVLILSSVIISCLLWGDL), 95 to 115 (TSIYLWILILVVIFFGAIGFF), 134 to 154 (KFALQSIFSIVLAIVLFYLLS), 168 to 188 (SLYIPMGIVIFVVLAFFIING), 201 to 221 (GLAIVPVVLVAAGLGIYAYIE), 240 to 260 (LAEVAVFCAAVCGSGLAFLWF), 267 to 287 (VFMGDVGSLTLGAVLGVIAVM), 292 to 312 (LIFFIMGLLFVVEALSVMLQV), and 342 to 362 (KVVIRFWIISLILFLIGLAAI).

This sequence belongs to the glycosyltransferase 4 family. MraY subfamily. The cofactor is Mg(2+).

Its subcellular location is the cell inner membrane. The catalysed reaction is UDP-N-acetyl-alpha-D-muramoyl-L-alanyl-gamma-D-glutamyl-meso-2,6-diaminopimeloyl-D-alanyl-D-alanine + di-trans,octa-cis-undecaprenyl phosphate = di-trans,octa-cis-undecaprenyl diphospho-N-acetyl-alpha-D-muramoyl-L-alanyl-D-glutamyl-meso-2,6-diaminopimeloyl-D-alanyl-D-alanine + UMP. Its pathway is cell wall biogenesis; peptidoglycan biosynthesis. Catalyzes the initial step of the lipid cycle reactions in the biosynthesis of the cell wall peptidoglycan: transfers peptidoglycan precursor phospho-MurNAc-pentapeptide from UDP-MurNAc-pentapeptide onto the lipid carrier undecaprenyl phosphate, yielding undecaprenyl-pyrophosphoryl-MurNAc-pentapeptide, known as lipid I. The chain is Phospho-N-acetylmuramoyl-pentapeptide-transferase from Francisella tularensis subsp. mediasiatica (strain FSC147).